A 327-amino-acid chain; its full sequence is Tetraacyldisaccharide 4'-kinase (327 aa).

52–59 is a binding site for ATP; the sequence is TLGGAGKT.

The protein belongs to the LpxK family.

The enzyme catalyses a lipid A disaccharide + ATP = a lipid IVA + ADP + H(+). It functions in the pathway glycolipid biosynthesis; lipid IV(A) biosynthesis; lipid IV(A) from (3R)-3-hydroxytetradecanoyl-[acyl-carrier-protein] and UDP-N-acetyl-alpha-D-glucosamine: step 6/6. In terms of biological role, transfers the gamma-phosphate of ATP to the 4'-position of a tetraacyldisaccharide 1-phosphate intermediate (termed DS-1-P) to form tetraacyldisaccharide 1,4'-bis-phosphate (lipid IVA). This chain is Tetraacyldisaccharide 4'-kinase, found in Methylorubrum populi (strain ATCC BAA-705 / NCIMB 13946 / BJ001) (Methylobacterium populi).